Here is a 113-residue protein sequence, read N- to C-terminus: Cell division topological specificity factor (113 aa).

Belongs to the MinE family.

Prevents the cell division inhibition by proteins MinC and MinD at internal division sites while permitting inhibition at polar sites. This ensures cell division at the proper site by restricting the formation of a division septum at the midpoint of the long axis of the cell. This chain is Cell division topological specificity factor, found in Methylobacterium radiotolerans (strain ATCC 27329 / DSM 1819 / JCM 2831 / NBRC 15690 / NCIMB 10815 / 0-1).